Consider the following 435-residue polypeptide: Methylenetetrahydrofolate--tRNA-(uracil-5-)-methyltransferase TrmFO (435 aa).

10–15 serves as a coordination point for FAD; it reads GAGLAG.

This sequence belongs to the MnmG family. TrmFO subfamily. Homodimer. It depends on FAD as a cofactor.

It localises to the cytoplasm. The enzyme catalyses uridine(54) in tRNA + (6R)-5,10-methylene-5,6,7,8-tetrahydrofolate + NADH + H(+) = 5-methyluridine(54) in tRNA + (6S)-5,6,7,8-tetrahydrofolate + NAD(+). The catalysed reaction is uridine(54) in tRNA + (6R)-5,10-methylene-5,6,7,8-tetrahydrofolate + NADPH + H(+) = 5-methyluridine(54) in tRNA + (6S)-5,6,7,8-tetrahydrofolate + NADP(+). In terms of biological role, catalyzes the folate-dependent formation of 5-methyl-uridine at position 54 (M-5-U54) in all tRNAs. This is Methylenetetrahydrofolate--tRNA-(uracil-5-)-methyltransferase TrmFO from Bacillus subtilis (strain 168).